The sequence spans 324 residues: Malate dehydrogenase (324 aa).

NAD(+) contacts are provided by residues 7-13 (GAAGGIG) and Asp34. 2 residues coordinate substrate: Arg88 and Arg94. NAD(+)-binding positions include Asn101 and 124–126 (VTN). 2 residues coordinate substrate: Asn126 and Arg160. His184 acts as the Proton acceptor in catalysis. Met238 lines the NAD(+) pocket.

Belongs to the LDH/MDH superfamily. MDH type 1 family. As to quaternary structure, homodimer.

It carries out the reaction (S)-malate + NAD(+) = oxaloacetate + NADH + H(+). Catalyzes the reversible oxidation of malate to oxaloacetate. The chain is Malate dehydrogenase from Haemophilus ducreyi (strain 35000HP / ATCC 700724).